The following is a 152-amino-acid chain: Endoribonuclease YbeY (152 aa).

3 residues coordinate Zn(2+): His-113, His-117, and His-123.

This sequence belongs to the endoribonuclease YbeY family. It depends on Zn(2+) as a cofactor.

The protein localises to the cytoplasm. Functionally, single strand-specific metallo-endoribonuclease involved in late-stage 70S ribosome quality control and in maturation of the 3' terminus of the 16S rRNA. In Delftia acidovorans (strain DSM 14801 / SPH-1), this protein is Endoribonuclease YbeY.